The chain runs to 38 residues: Spheniscin-2 (38 aa).

Disulfide bonds link Cys-5-Cys-33, Cys-12-Cys-27, and Cys-17-Cys-34.

Monomer. Secreted into the stomach cavity.

It localises to the secreted. In terms of biological role, has antifungal activity and antibacterial activity against Gram-positive and Gram-negative bacteria. Involved in the process of food preservation in the stomach during the incubation fast. May also be present during infection. The sequence is that of Spheniscin-2 from Aptenodytes patagonicus (King penguin).